Here is a 402-residue protein sequence, read N- to C-terminus: MSRVSQARNLGKYFLLIDNMLVVLGFFVVFPLISIRFVDQMGWAAVMVGIALGLRQFIQQGLGIFGGAIADRFGAKPMIVTGMLMRAAGFATMGIAHEPWLLWFSCFLSGLGGTLFDPPRSALVVKLIRPEQRGRFFSLLMMQDSAGAVIGALLGSWLLQYDFRLVCATGAILFILCALFNAWLLPAWKLSTVRTPVREGMRRVMSDKRFVTYVLTLAGYYMLAVQVMLMLPIMVNDIAGSPAAVKWMYAIEACLSLTLLYPIARWSEKRFRLEHRLMAGLLVMSLSMIPIGMVGNLQQLFTLICAFYIGSVIAEPARETLSASLADARARGSYMGFSRLGLAIGGAIGYIGGGWLFDMGKALAQPELPWMMLGIIGFITFLALGWQFSHKRTPRRMLEPGA.

Topologically, residues methionine 1–lysine 12 are cytoplasmic. The helical transmembrane segment at tyrosine 13 to isoleucine 33 threads the bilayer. Over serine 34–glutamate 98 the chain is Periplasmic. Residues proline 99 to phenylalanine 116 form a helical membrane-spanning segment. Residues aspartate 117 to serine 138 lie on the Cytoplasmic side of the membrane. A helical transmembrane segment spans residues leucine 139 to leucine 159. Topologically, residues glutamine 160–arginine 164 are periplasmic. The helical transmembrane segment at leucine 165–leucine 185 threads the bilayer. Residues proline 186–tyrosine 213 are Cytoplasmic-facing. A helical membrane pass occupies residues valine 214 to methionine 234. Topologically, residues valine 235 to alanine 243 are periplasmic. Residues alanine 244–alanine 264 form a helical membrane-spanning segment. Topologically, residues arginine 265–arginine 276 are cytoplasmic. A helical membrane pass occupies residues leucine 277–leucine 297. Residues glutamine 298–glutamine 299 lie on the Periplasmic side of the membrane. Residues leucine 300–threonine 320 traverse the membrane as a helical segment. The Cytoplasmic segment spans residues leucine 321–arginine 339. Residues leucine 340–glycine 360 traverse the membrane as a helical segment. Residues lysine 361–glutamate 367 lie on the Periplasmic side of the membrane. A helical transmembrane segment spans residues leucine 368–phenylalanine 388. Residues serine 389–alanine 402 lie on the Cytoplasmic side of the membrane.

It belongs to the major facilitator superfamily. DHA1 family. MdtH (TC 2.A.1.2.21) subfamily.

Its subcellular location is the cell inner membrane. This is Multidrug resistance protein MdtH from Salmonella schwarzengrund (strain CVM19633).